The sequence spans 692 residues: PTS system glucoside-specific EIICBA component (692 aa).

In terms of domain architecture, PTS EIIC type-1 spans 6 to 430; the sequence is KKFFGQLQRI…LNLKTPGRED (425 aa). Helical transmembrane passes span 15-35, 84-104, 140-160, 185-205, 215-235, 287-307, 318-338, 344-364, 370-390, and 398-418; these read IGKA…LLTF, LGLA…YLIM, LVLG…IGAL, FVPI…SFVW, LSNF…GIIE, AFTT…AFAI, VVGG…ITEP, LFVA…SFLI, VQIG…GLLS, and LVIP…TFLI. In terms of domain architecture, PTS EIIB type-1 spans 441-522; it reads SELPFEVLEA…QQIMDGKITS (82 aa). Residue Cys-463 is the Phosphocysteine intermediate; for EIIB activity of the active site. The PTS EIIA type-1 domain maps to 563–667; sequence DKVFSAKMMG…DTITPIIITN (105 aa). His-615 serves as the catalytic Tele-phosphohistidine intermediate; for EIIA activity.

The protein resides in the cell membrane. Inhibited by methyl alpha-D-glucoside, methyl beta-D-glucoside, p-nitrophenyl alpha-D-glucoside, o-nitrophenyl beta-D-glucoside and salicin, but not by 2-deoxyglucose. The phosphoenolpyruvate-dependent sugar phosphotransferase system (sugar PTS), a major carbohydrate active -transport system, catalyzes the phosphorylation of incoming sugar substrates concomitantly with their translocation across the cell membrane. This system is involved in alpha- and beta-glucoside transport. Can also transport glucose, but not galactose, fructose, mannose, cellobiose, sucrose, maltose, lactose, melibiose and trehalose, as well as N-acetylglucosamine. This is PTS system glucoside-specific EIICBA component (glcB) from Staphylococcus carnosus (strain TM300).